Here is a 344-residue protein sequence, read N- to C-terminus: Transmembrane protein 268 (344 aa).

The disordered stretch occupies residues 1–31 (MACEPQMDPGGAAGPLPTSSPGWSPLPGGSP). Positions 14–27 (GPLPTSSPGWSPLP) are enriched in low complexity. Helical transmembrane passes span 106-126 (AFAVVFYVVVWANIYSTSQMF) and 133-153 (AGVLLVTLAATSLTLTLVVIF). Positions 244–266 (TANEGPENLLEETPLLPDRPGST) are disordered. Positions 247-259 (EGPENLLEETPLL) are enriched in low complexity.

As to quaternary structure, interacts with ITGAM; this interaction inhibits ITGAM degradation via the endosome-lysosome pathway. Interacts with ITGB4; this interaction prevents ITGB4 degradation.

Its subcellular location is the cell membrane. Its function is as follows. Stabilizes cell surface expression of ITGAM and participates in the adhesion and migration of phagocytes during bacterial clearance. In Bos taurus (Bovine), this protein is Transmembrane protein 268 (TMEM268).